The sequence spans 223 residues: MEDVKLEFPSLPQCKEDAEEWTYPMRREMQEILPGLFLGPYSSAMKSKLPILQKHGITHIICIRQNIEANFIKPNFQQLFRYLVLDIADNPVENIIRFFPMTKEFIDGSLQMGGKVLVHGNAGISRSAAFVIAYIMETFGMKYRDAFAYVQERRFCINPNAGFVHQLQEYEAIYLAKLTIQMMSPLQIERSLSVHSGTTGSLKRTHEEEDDFGTMQVATAQNG.

The Tyrosine-protein phosphatase domain occupies 28–176 (EMQEILPGLF…LQEYEAIYLA (149 aa)). The short motif at 76–78 (FQQ) is the Interaction with FBXW7 element. A phosphoserine mark is found at Ser-184, Ser-193, and Ser-201. Residues 197-223 (GTTGSLKRTHEEEDDFGTMQVATAQNG) form a disordered region.

The protein belongs to the protein-tyrosine phosphatase family. Non-receptor class subfamily. As to quaternary structure, interacts with MAPK1; independently of MAPK1 phosphorylation status. Interacts with CARHSP1/Crhsp-24. Interacts (via FQQ motif) with FBXW7 (via F-box domain); the interaction is direct and prevents FBXW7 interaction with SKP1, a component of the SCF(FBXW7) complex.

Its subcellular location is the nucleus. It localises to the cytoplasm. The protein localises to the cytosol. In terms of biological role, catalytically inactive phosphatase. Acts as a nuclear anchor for MAPK1/MAPK3 (ERK1/ERK2). Modulates cell-fate decisions and cell migration by spatiotemporal regulation of MAPK1/MAPK3 (ERK1/ERK2). By binding to the F-box of FBXW7, prevents the assembly of FBXW7 into the SCF E3 ubiquitin-protein ligase complex, and thereby inhibits degradation of its substrates. Plays a role in spermatogenesis. In Pongo abelii (Sumatran orangutan), this protein is Serine/threonine/tyrosine-interacting protein (STYX).